Reading from the N-terminus, the 634-residue chain is Transmembrane and coiled-coil domain-containing protein 4 (634 aa).

Residues 150-190 (EELDVLEEMFLESLKEIKEEESEMAEASRKKKENRRKWKRY) adopt a coiled-coil conformation. A run of 3 helical transmembrane segments spans residues 203 to 223 (VIGV…ATII), 231 to 251 (LGSA…GAGL), and 346 to 366 (LSGI…ANVI). The interval 542–612 (EPRQAAAAAS…ERPPICSHGM (71 aa)) is disordered. The span at 552–583 (SGETPHQVGQTQGPISGDTSKLAMSTDPSQAQ) shows a compositional bias: polar residues.

The protein belongs to the TMCO4 family.

The protein localises to the membrane. The polypeptide is Transmembrane and coiled-coil domain-containing protein 4 (TMCO4) (Homo sapiens (Human)).